The primary structure comprises 87 residues: Guanine nucleotide-binding protein subunit gamma (87 aa).

Residue Cys-84 is modified to Cysteine methyl ester. Cys-84 carries S-geranylgeranyl cysteine lipidation. Residues 85-87 (LLV) constitute a propeptide, removed in mature form.

The protein belongs to the G protein gamma family. G proteins are composed of 3 units, alpha, beta and gamma. The N-terminus is blocked.

The protein resides in the cell membrane. Its function is as follows. Guanine nucleotide-binding proteins (G proteins) are involved as a modulator or transducer in various transmembrane signaling systems. This major G-protein of the squid photoreceptor is involved in visual transduction. The beta and gamma chains are required for the GTPase activity, for replacement of GDP by GTP, and for G protein-effector interaction. The polypeptide is Guanine nucleotide-binding protein subunit gamma (Loligo forbesii (Veined squid)).